We begin with the raw amino-acid sequence, 564 residues long: Nucleolus and neural progenitor protein (564 aa).

The disordered stretch occupies residues 431 to 495 (GSRTSTSEHP…KRRCSGTVQR (65 aa)). Over residues 442 to 459 (RQRRSKYKVLSRQRKPQR) the composition is skewed to basic residues. Residues 442–460 (RQRRSKYKVLSRQRKPQRK) form a nuclear localization signal region. Residues 460 to 473 (KLQSTLLKETQQVP) show a composition bias toward polar residues.

Belongs to the nepro family.

The protein resides in the nucleus. The protein localises to the nucleolus. Its function is as follows. May play a role in cortex development as part of the Notch signaling pathway. Downstream of Notch may repress the expression of proneural genes and inhibit neuronal differentiation thereby maintaining neural progenitors. May also play a role in preimplentation embryo development. The chain is Nucleolus and neural progenitor protein from Mus musculus (Mouse).